We begin with the raw amino-acid sequence, 315 residues long: KH domain-containing protein At5g56140 (315 aa).

Disordered regions lie at residues 1-53 (MMMM…GGLR) and 136-158 (SQFPSERSVPSSPGPNWLNSPGS). Gly residues predominate over residues 7–28 (LGGGGGGGGGSGGGIGGGGGGR). Polar residues-rich tracts occupy residues 31–53 (TYSSSLSVPPSAPQSPNYSGGLR) and 136–146 (SQFPSERSVPS). Positions 171–238 (DIPVDNYPNF…EHLNEPLHIL (68 aa)) constitute a KH domain. The tract at residues 289–315 (REEGSPMSGSVSPYNSLGMKRAKTREG) is disordered. Serine 300 is subject to Phosphoserine.

Its subcellular location is the nucleus. The chain is KH domain-containing protein At5g56140 from Arabidopsis thaliana (Mouse-ear cress).